Here is a 343-residue protein sequence, read N- to C-terminus: Heat-inducible transcription repressor HrcA (343 aa).

This sequence belongs to the HrcA family.

Its function is as follows. Negative regulator of class I heat shock genes (grpE-dnaK-dnaJ and groELS operons). Prevents heat-shock induction of these operons. The polypeptide is Heat-inducible transcription repressor HrcA (Thermobifida fusca (strain YX)).